The following is a 69-amino-acid chain: Peptide Hact-1 (69 aa).

The signal sequence occupies residues 1–21; the sequence is MDRKFHLCLLLVILGTIIVQG. Positions 22–57 are excised as a propeptide; it reads APLENENDADPDKPQKYRYYLKRATTEKKDNDPAKP. Residues Cys-59 and Cys-68 are joined by a disulfide bond.

Tentacle (ecto and/or endoderm tissue), and possibly also nematoblasts.

The protein resides in the secreted. It localises to the nematocyst. In terms of biological role, peptide with unknown function. Has a limited effect on human peripheral blood mononuclear cells. Does not show activity against both Gram-positive and Gram-negative bacteria nor is it active on the 26 voltage-gated ion channels tested. The polypeptide is Peptide Hact-1 (Heliofungia actiniformis (Mushroom coral)).